Consider the following 583-residue polypeptide: Proline--tRNA ligase (583 aa).

Belongs to the class-II aminoacyl-tRNA synthetase family. ProS type 1 subfamily. Homodimer.

It localises to the cytoplasm. It catalyses the reaction tRNA(Pro) + L-proline + ATP = L-prolyl-tRNA(Pro) + AMP + diphosphate. In terms of biological role, catalyzes the attachment of proline to tRNA(Pro) in a two-step reaction: proline is first activated by ATP to form Pro-AMP and then transferred to the acceptor end of tRNA(Pro). As ProRS can inadvertently accommodate and process non-cognate amino acids such as alanine and cysteine, to avoid such errors it has two additional distinct editing activities against alanine. One activity is designated as 'pretransfer' editing and involves the tRNA(Pro)-independent hydrolysis of activated Ala-AMP. The other activity is designated 'posttransfer' editing and involves deacylation of mischarged Ala-tRNA(Pro). The misacylated Cys-tRNA(Pro) is not edited by ProRS. The sequence is that of Proline--tRNA ligase from Acidothermus cellulolyticus (strain ATCC 43068 / DSM 8971 / 11B).